Reading from the N-terminus, the 529-residue chain is UDP-glucuronosyltransferase 2B7 (529 aa).

The N-terminal stretch at 1 to 23 is a signal peptide; sequence MSVKWTSVILLIQLSFCFSSGNC. N-linked (GlcNAc...) asparagine glycans are attached at residues N67, N68, and N315. UDP-alpha-D-glucuronate-binding positions include 373–379 and D398; that span reads THGGANG. A helical membrane pass occupies residues 493–509; sequence VIGFLLVCVATVIFIVT.

Belongs to the UDP-glycosyltransferase family.

It localises to the endoplasmic reticulum membrane. The enzyme catalyses glucuronate acceptor + UDP-alpha-D-glucuronate = acceptor beta-D-glucuronoside + UDP + H(+). It catalyses the reaction 17alpha-estradiol + UDP-alpha-D-glucuronate = 17alpha-estradiol 17-O-(beta-D-glucuronate) + UDP + H(+). The catalysed reaction is 17beta-estradiol + UDP-alpha-D-glucuronate = 17beta-estradiol 17-O-(beta-D-glucuronate) + UDP + H(+). It carries out the reaction 2-hydroxy-17beta-estradiol + UDP-alpha-D-glucuronate = 2-hydroxy-17beta-estradiol 3-O-(beta-D-glucuronate) + UDP + H(+). The enzyme catalyses 4-hydroxy-17beta-estradiol + UDP-alpha-D-glucuronate = 17beta-estradiol 4-O-(beta-D-glucuronate) + UDP + H(+). It catalyses the reaction 4-hydroxyestrone + UDP-alpha-D-glucuronate = estrone 4-O-(beta-D-glucuronate) + UDP + H(+). The catalysed reaction is 16alpha-hydroxyestrone + UDP-alpha-D-glucuronate = 16alpha-hydroxyestrone 16-O-(beta-D-glucuronate) + UDP + H(+). It carries out the reaction 16alpha,17beta-estriol + UDP-alpha-D-glucuronate = 16alpha,17beta-estriol 16-O-(beta-D-glucuronate) + UDP + H(+). The enzyme catalyses 16beta,17beta-estriol + UDP-alpha-D-glucuronate = 16beta,17beta-estriol 16-O-(beta-D-glucuronate) + UDP + H(+). It catalyses the reaction 16alpha,17alpha-estriol + UDP-alpha-D-glucuronate = 16alpha,17alpha-estriol 16-O-(beta-D-glucuronate) + UDP + H(+). The catalysed reaction is 16alpha,17alpha-estriol + UDP-alpha-D-glucuronate = 16alpha,17alpha-estriol 17-O-(beta-D-glucuronate) + UDP + H(+). It carries out the reaction epitestosterone + UDP-alpha-D-glucuronate = epitestosterone 17-O-(beta-D-glucuronate) + UDP + H(+). The enzyme catalyses hyodeoxycholate + UDP-alpha-D-glucuronate = hyodeoxycholate 6-O-(beta-D-glucuronate) + UDP + H(+). It catalyses the reaction hyocholate + UDP-alpha-D-glucuronate = hyocholate 6-O-(beta-D-glucuronate) + UDP + H(+). The catalysed reaction is all-trans-retinoate + UDP-alpha-D-glucuronate = all-trans-retinoyl-1-O-(beta-D-glucuronate) + UDP. It carries out the reaction all-trans-4-hydroxyretinoate + UDP-alpha-D-glucuronate = all-trans-4-hydroxy-4-O-(beta-D-glucuronide)-retinoate + UDP + H(+). The enzyme catalyses (E)-ferulate + UDP-alpha-D-glucuronate = (E)-ferulic acid beta-D-glucuronate ester + UDP. It catalyses the reaction 8-iso-prostaglandin F2alpha + UDP-alpha-D-glucuronate = 8-iso-prostaglandin F2alpha-glucuronide + UDP + H(+). The catalysed reaction is 5-epi-5-F2t-IsoP + UDP-alpha-D-glucuronate = 5-epi-5-F2t-IsoP-glucuronide + UDP + H(+). It carries out the reaction (5Z,8Z,11Z,14Z)-eicosatetraenoate + UDP-alpha-D-glucuronate = O-[(5Z),(8Z),(11Z),(14Z)-eicosatetraenoyl]-beta-D-glucuronate + UDP. The enzyme catalyses 15-hydroxy-(5Z,8Z,11Z,13E)-eicosatetraenoate + UDP-alpha-D-glucuronate = 15-O-(beta-D-glucuronosyl)-(5Z,8Z,11Z,14Z)-eicosatetraenoate + UDP + H(+). It catalyses the reaction 20-hydroxy-(5Z,8Z,11Z,14Z)-eicosatetraenoate + UDP-alpha-D-glucuronate = 20-O-(beta-D-glucuronosyl)-(5Z,8Z,11Z,14Z)-eicosatetraenoate + UDP + H(+). The catalysed reaction is (E)-ferulate + UDP-alpha-D-glucuronate = (E)-4-O-(beta-D-glucuronosyl)-ferulate + UDP + H(+). It carries out the reaction prostaglandin B1 + UDP-alpha-D-glucuronate = 15-O-(beta-D-glucuronosyl)-prostaglandin B1 + UDP + H(+). The enzyme catalyses mycophenolate + UDP-alpha-D-glucuronate = mycophenolic acid O-acyl-beta-D-glucuronide + UDP. It catalyses the reaction losartan + UDP-alpha-D-glucuronate = losartan-2-N-beta-D-glucuronide + UDP. The catalysed reaction is candesartan + UDP-alpha-D-glucuronate = candesartan O-beta-D-glucuronoside + UDP. It carries out the reaction candesartan + UDP-alpha-D-glucuronate = candesartan-2-N-beta-D-glucuronide + UDP. The enzyme catalyses zolasartan + UDP-alpha-D-glucuronate = zolarsartan O-beta-D-glucuronoside + UDP. Its function is as follows. UDP-glucuronosyltransferase (UGT) that catalyzes phase II biotransformation reactions in which lipophilic substrates are conjugated with glucuronic acid to increase the metabolite's water solubility, thereby facilitating excretion into either the urine or bile. Essential for the elimination and detoxification of drugs, xenobiotics and endogenous compounds. Catalyzes the glucuronidation of endogenous steroid hormones such as androgens (epitestosterone, androsterone) and estrogens (estradiol, epiestradiol, estriol, catechol estrogens). Also regulates the levels of retinoic acid, a major metabolite of vitamin A involved in apoptosis, cellular growth and differentiation, and embryonic development. Contributes to bile acid (BA) detoxification by catalyzing the glucuronidation of BA substrates, which are natural detergents for dietary lipids absorption. Involved in the glucuronidation of arachidonic acid (AA) and AA-derived eicosanoids including 15-HETE, 20-HETE, PGE2, PGB1 and F2-isoprostanes (8-iso-PGF2alpha and 5-epi-5-F2t-IsoP). Involved in the glucuronidation of the phytochemical ferulic acid at the phenolic or the carboxylic acid group. Involved in the glucuronidation of the AGTR1 angiotensin receptor antagonist losartan, caderastan and zolarsatan, drugs which can inhibit the effect of angiotensin II. Also metabolizes mycophenolate, an immunosuppressive agent. The sequence is that of UDP-glucuronosyltransferase 2B7 from Homo sapiens (Human).